The following is a 307-amino-acid chain: NAD kinase (307 aa).

Residue aspartate 85 is the Proton acceptor of the active site. NAD(+)-binding positions include 85-86 (DG), arginine 90, 159-160 (NE), aspartate 189, and 200-205 (TAYAFS).

This sequence belongs to the NAD kinase family. A divalent metal cation serves as cofactor.

The protein localises to the cytoplasm. It carries out the reaction NAD(+) + ATP = ADP + NADP(+) + H(+). Functionally, involved in the regulation of the intracellular balance of NAD and NADP, and is a key enzyme in the biosynthesis of NADP. Catalyzes specifically the phosphorylation on 2'-hydroxyl of the adenosine moiety of NAD to yield NADP. The chain is NAD kinase from Mycobacterium bovis (strain ATCC BAA-935 / AF2122/97).